We begin with the raw amino-acid sequence, 243 residues long: ATP synthase subunit a (243 aa).

8 helical membrane-spanning segments follow: residues 29–49 (NASL…YVGL), 54–74 (VIPN…VSTI), 89–109 (VFTI…PLGF), 114–134 (HIAV…FIGF), 141–161 (FLHI…MVLI), 177–197 (LAAN…FVIN), 200–220 (IFLT…EIFV), and 221–241 (AILQ…DAVN).

This sequence belongs to the ATPase A chain family. F-type ATPases have 2 components, CF(1) - the catalytic core - and CF(0) - the membrane proton channel. CF(1) has five subunits: alpha(3), beta(3), gamma(1), delta(1), epsilon(1). CF(0) has three main subunits: a(1), b(2) and c(9-12). The alpha and beta chains form an alternating ring which encloses part of the gamma chain. CF(1) is attached to CF(0) by a central stalk formed by the gamma and epsilon chains, while a peripheral stalk is formed by the delta and b chains.

It is found in the cell inner membrane. Its function is as follows. Key component of the proton channel; it plays a direct role in the translocation of protons across the membrane. This is ATP synthase subunit a from Ehrlichia ruminantium (strain Welgevonden).